The primary structure comprises 176 residues: Large ribosomal subunit protein bL17m (176 aa).

Residues 1–8 (MRLSLAAA) constitute a mitochondrion transit peptide.

The protein belongs to the bacterial ribosomal protein bL17 family. As to quaternary structure, component of the mitochondrial ribosome large subunit (39S) which comprises a 16S rRNA and about 50 distinct proteins.

Its subcellular location is the mitochondrion. The protein is Large ribosomal subunit protein bL17m (Mrpl17) of Mus musculus (Mouse).